The primary structure comprises 118 residues: Cell division protein SepF (118 aa).

Positions 1-12 (MGIMSKILGGGG) are important for localization in a ring-like structure at midcell.

Homodimer. Does not oligomerize. Interacts with FtsZ2.

The protein localises to the cytoplasm. In terms of biological role, involved in cell division. Probably acts as a membrane anchor for FstZ2, tethering its filaments to the division site. May be involved in septum closure. The protein is Cell division protein SepF of Haloferax volcanii (strain ATCC 29605 / DSM 3757 / JCM 8879 / NBRC 14742 / NCIMB 2012 / VKM B-1768 / DS2) (Halobacterium volcanii).